The primary structure comprises 372 residues: Glutamate 5-kinase (372 aa).

Position 14 (Lys-14) interacts with ATP. Positions 54, 141, and 153 each coordinate substrate. Thr-173–Asp-174 contacts ATP. Residues Arg-280–Ile-358 enclose the PUA domain.

Belongs to the glutamate 5-kinase family.

Its subcellular location is the cytoplasm. It catalyses the reaction L-glutamate + ATP = L-glutamyl 5-phosphate + ADP. Its pathway is amino-acid biosynthesis; L-proline biosynthesis; L-glutamate 5-semialdehyde from L-glutamate: step 1/2. Catalyzes the transfer of a phosphate group to glutamate to form L-glutamate 5-phosphate. The sequence is that of Glutamate 5-kinase from Nitrosospira multiformis (strain ATCC 25196 / NCIMB 11849 / C 71).